Reading from the N-terminus, the 506-residue chain is Histidine ammonia-lyase (506 aa).

Positions 142-144 (ASG) form a cross-link, 5-imidazolinone (Ala-Gly). Position 143 is a 2,3-didehydroalanine (Ser) (serine 143).

It belongs to the PAL/histidase family. Post-translationally, contains an active site 4-methylidene-imidazol-5-one (MIO), which is formed autocatalytically by cyclization and dehydration of residues Ala-Ser-Gly.

It localises to the cytoplasm. It catalyses the reaction L-histidine = trans-urocanate + NH4(+). Its pathway is amino-acid degradation; L-histidine degradation into L-glutamate; N-formimidoyl-L-glutamate from L-histidine: step 1/3. The polypeptide is Histidine ammonia-lyase (Bacillus cereus (strain ATCC 14579 / DSM 31 / CCUG 7414 / JCM 2152 / NBRC 15305 / NCIMB 9373 / NCTC 2599 / NRRL B-3711)).